Here is a 188-residue protein sequence, read N- to C-terminus: Succinate-acetate/proton symporter SatP (188 aa).

Residues 1–13 lie on the Cytoplasmic side of the membrane; sequence MGNTKLANPAPLG. Residues 14–34 form a helical membrane-spanning segment; it reads LMGFGMTTILLNLHNVGYFAL. A topological domain (periplasmic) is located at residue aspartate 35. The chain crosses the membrane as a helical span at residues 36-56; sequence GIILAMGIFYGGIAQIFAGLL. Topologically, residues 57-63 are cytoplasmic; the sequence is EYKKGNT. Residues 64–84 traverse the membrane as a helical segment; it reads FGLTAFTSYGSFWLTLVAILL. Residues 85–97 are Periplasmic-facing; it reads MPKLGLTDAPNAQ. The chain crosses the membrane as a helical span at residues 98–118; that stretch reads FLGVYLGLWGVFTLFMFFGTL. Over 119–122 the chain is Cytoplasmic; it reads KGAR. Residues 123–143 traverse the membrane as a helical segment; the sequence is VLQFVFFSLTVLFALLAIGNI. Over 144-148 the chain is Periplasmic; the sequence is AGNAA. A helical membrane pass occupies residues 149-169; that stretch reads IIHFAGWIGLICGASAIYLAM. The Cytoplasmic segment spans residues 170-188; it reads GEVLNEQFGRTVLPIGESH.

It belongs to the acetate uptake transporter (AceTr) (TC 2.A.96) family.

The protein resides in the cell inner membrane. In terms of biological role, uptake of acetate and succinate. Transport is energetically dependent on the protonmotive force. The chain is Succinate-acetate/proton symporter SatP (satP) from Escherichia coli O157:H7.